The following is an 87-amino-acid chain: Sec-independent protein translocase protein TatA (87 aa).

The helical transmembrane segment at 1 to 21 threads the bilayer; it reads MGSFSIWHWLIVLLIVVMVFG. Residues 40–87 form a disordered region; that stretch reads KDGMKDGSTPEGTPASTTAATPPAGQVTNQQAHAADPGTIDVEAKHKG. The span at 46–64 shows a compositional bias: low complexity; sequence GSTPEGTPASTTAATPPAG.

Belongs to the TatA/E family. The Tat system comprises two distinct complexes: a TatABC complex, containing multiple copies of TatA, TatB and TatC subunits, and a separate TatA complex, containing only TatA subunits. Substrates initially bind to the TatABC complex, which probably triggers association of the separate TatA complex to form the active translocon.

It localises to the cell inner membrane. In terms of biological role, part of the twin-arginine translocation (Tat) system that transports large folded proteins containing a characteristic twin-arginine motif in their signal peptide across membranes. TatA could form the protein-conducting channel of the Tat system. The chain is Sec-independent protein translocase protein TatA from Paracidovorax citrulli (strain AAC00-1) (Acidovorax citrulli).